A 253-amino-acid chain; its full sequence is 5'/3'-nucleotidase SurE (253 aa).

A divalent metal cation is bound by residues Asp-8, Asp-9, Ser-39, and Asn-92.

It belongs to the SurE nucleotidase family. Requires a divalent metal cation as cofactor.

It localises to the cytoplasm. The enzyme catalyses a ribonucleoside 5'-phosphate + H2O = a ribonucleoside + phosphate. It catalyses the reaction a ribonucleoside 3'-phosphate + H2O = a ribonucleoside + phosphate. The catalysed reaction is [phosphate](n) + H2O = [phosphate](n-1) + phosphate + H(+). Nucleotidase with a broad substrate specificity as it can dephosphorylate various ribo- and deoxyribonucleoside 5'-monophosphates and ribonucleoside 3'-monophosphates with highest affinity to 3'-AMP. Also hydrolyzes polyphosphate (exopolyphosphatase activity) with the preference for short-chain-length substrates (P20-25). Might be involved in the regulation of dNTP and NTP pools, and in the turnover of 3'-mononucleotides produced by numerous intracellular RNases (T1, T2, and F) during the degradation of various RNAs. This is 5'/3'-nucleotidase SurE from Escherichia coli O17:K52:H18 (strain UMN026 / ExPEC).